The following is a 267-amino-acid chain: uncharacterized protein (267 aa).

This is an uncharacterized protein from Saccharomyces cerevisiae (strain ATCC 204508 / S288c) (Baker's yeast).